The chain runs to 317 residues: uncharacterized protein (317 aa).

A run of 6 helical transmembrane segments spans residues 14-34 (IPLL…ATVS), 72-92 (LIGF…YGAV), 119-139 (LLFG…LDIA), 196-216 (TLLN…FCKQ), 230-250 (LFLG…ADVL), and 291-307 (SNML…WYTY). Solcar repeat units follow at residues 18 to 103 (SNDL…LKQR), 113 to 217 (LENH…CKQK), and 224 to 313 (LTAF…VSKM).

This sequence belongs to the mitochondrial carrier (TC 2.A.29) family.

It localises to the mitochondrion inner membrane. This is an uncharacterized protein from Schizosaccharomyces pombe (strain 972 / ATCC 24843) (Fission yeast).